A 343-amino-acid polypeptide reads, in one-letter code: Pentatricopeptide repeat-containing protein At1g06270 (343 aa).

PPR repeat units follow at residues 98–133 (PKIV…GCLP), 134–169 (NPQT…GYSP), 170–204 (DTGT…GCIP), 205–240 (DVES…GISP), 241–275 (RKGM…DYPV), and 276–310 (EFES…GFIP).

Belongs to the PPR family. P subfamily.

The polypeptide is Pentatricopeptide repeat-containing protein At1g06270 (Arabidopsis thaliana (Mouse-ear cress)).